The sequence spans 506 residues: Maturase K (506 aa).

This sequence belongs to the intron maturase 2 family. MatK subfamily.

Its subcellular location is the plastid. The protein localises to the chloroplast. Functionally, usually encoded in the trnK tRNA gene intron. Probably assists in splicing its own and other chloroplast group II introns. This chain is Maturase K, found in Lathyrus aphaca (Yellow vetchling).